The primary structure comprises 406 residues: MSGCPFSGNSVGYTLKNLSMEDNEEDGAQTGVNRASKGGLIYGDYLQLEKILNAQELQSEIKGNKIHDEHLFIITHQAYELWFKQILWELDSVREIFQNGHVRDERNMLKVMTRMHRVVVIFKLLVQQFSVLETMTALDFNDFREYLSPASGFQSLQFRLLENKIGVLQSLRVPYNRKHYRDNFEGDYNELLLKSEQEQTLLQLVEAWLERTPGLEPHGFNFWGKFEKNILKGLEEEFLKIQAKKDSEEKEEQMAEFRKQKEVLLCLFDEKRHDYLLSKGERRLSYRALQGALMIYFYREEPRFQVPFQLLTSLMDIDTLMTKWRYNHVCMVHRMLGSKAGTGGSSGYYYLRSTVSDRYKVFVDLFNLSSYLVPRHWIPKMNPIIHKFLYTAEYSDSSYFSSDESD.

Phosphoserine is present on S19. Substrate is bound by residues 72 to 76 and R144; that span reads FIITH. Heme is bound at residue H328. T342 contributes to the substrate binding site.

Belongs to the tryptophan 2,3-dioxygenase family. As to quaternary structure, homotetramer. Dimer of dimers. Requires heme as cofactor. Liver.

It carries out the reaction L-tryptophan + O2 = N-formyl-L-kynurenine. The protein operates within amino-acid degradation; L-tryptophan degradation via kynurenine pathway; L-kynurenine from L-tryptophan: step 1/2. Functionally, heme-dependent dioxygenase that catalyzes the oxidative cleavage of the L-tryptophan (L-Trp) pyrrole ring and converts L-tryptophan to N-formyl-L-kynurenine. Catalyzes the oxidative cleavage of the indole moiety. In Rattus norvegicus (Rat), this protein is Tryptophan 2,3-dioxygenase.